The sequence spans 259 residues: LOB domain-containing protein CRL1 (259 aa).

The region spanning 6–108 (SPCGACKFLR…AQLASLKAAA (103 aa)) is the LOB domain.

The protein belongs to the LOB domain-containing protein family. As to quaternary structure, can form homodimers. Expressed in unelongating basal internodes, at the base of shoot in parenchyma cells adjacent to the peripheral vascular cylinder of the stem, and root pericycle cells. Expressed in lateral and adventitious root primordia, tiller primordia, vascular tissues, scutellum, and young pedicels.

The protein resides in the nucleus. Functionally, acts as a positive regulator of adventitious (crown) root formation by promoting its initiation. Acts as a positive regulator of lateral root formation. Regulated by the auxin response factor and transcriptional activator ARF23/ARF1. Involved in auxin-mediated cell dedifferentiation, and may promote the initial cell division in the pericycle cells adjacent to the peripheral vascular cylinder at the base of the stem. May act upstream of the gene regulatory network controlling adventitious root (crown) development. The chain is LOB domain-containing protein CRL1 from Oryza sativa subsp. japonica (Rice).